The sequence spans 249 residues: Vesicle-associated membrane protein-associated protein A (249 aa).

Ala-2 is modified (N-acetylalanine). The Cytoplasmic portion of the chain corresponds to 2–227 (ASASGTMAKH…VSFRENVTSP (226 aa)). The region spanning 14–131 (ILVLDPPTDL…MDSKLRCVFE (118 aa)) is the MSP domain. A phosphorylated FFAT motif binding region spans residues 50-53 (KVKT). The residue at position 125 (Lys-125) is an N6-acetyllysine. Ser-166 is modified (phosphoserine). A coiled-coil region spans residues 169–205 (DTETRKLVEECKRLQGEMMKLSEENRLLRDEGLRLRK). Position 170 is a phosphothreonine (Thr-170). Phosphoserine occurs at positions 214, 216, and 219. Residues 228–248 (LPSLLVVIAAIFIGFFLGKFI) form a helical; Anchor for type IV membrane protein membrane-spanning segment.

The protein belongs to the VAMP-associated protein (VAP) (TC 9.B.17) family. Homodimer; disulfide-linked. Heterodimer with VAPB. Interacts with VAMP1, VAMP2, STX1A, BET1, SEC22C and with the C-terminal domain of OCLN. Interacts (via MSP domain) with OSBPL1A (via FFAT motif). Interacts (via MSP domain) with ZFYVE27; may retain ZFYVE27 in the endoplasmic reticulum and regulate its function in cell projections formation. Interacts with OSBP. Interacts (via C-terminus) with RSAD2/viperin (via C-terminus). Interacts with IFITM3. Interacts with OSBPL3 (phosphorylated form). Interacts with KIF5A in a ZFYVE27-dependent manner. Interacts (via MSP domain) with STARD3 (via phosphorylated FFAT motif); this interaction recruits VAPA to the endosome. Interacts with STARD3NL (via FFAT motif). Interacts with CERT1. Interacts with PLEKHA3 and SACM1L to form a ternary complex. Interacts with VPS13A (via FFAT motif). Interacts with RB1CC1 (via phosphorylated FFAT motif), MIGA2 (via phosphorylated FFAT motif), RMDN3 (via phosphorylated FFAT motif), KCNB1 (via phosphorylated FFAT motif) and KCNB2 (via phosphorylated FFAT motif). Interacts (via MSP domain) with WDR44 (via FFAT-like motif); the interactions connect the endoplasmic reticulum (ER) with the endosomal tubule.

The protein resides in the endoplasmic reticulum membrane. Its subcellular location is the cell junction. It is found in the tight junction. It localises to the cell membrane. In terms of biological role, endoplasmic reticulum (ER)-anchored protein that mediates the formation of contact sites between the ER and endosomes via interaction with FFAT motif-containing proteins such as STARD3 or WDR44. STARD3-VAPA interaction enables cholesterol transfer from the ER to endosomes. Via interaction with WDR44 participates in neosynthesized protein export. In addition, recruited to the plasma membrane through OSBPL3 binding. The OSBPL3-VAPA complex stimulates RRAS signaling which in turn attenuates integrin beta-1 (ITGB1) activation at the cell surface. With OSBPL3, may regulate ER morphology. May play a role in vesicle trafficking. The chain is Vesicle-associated membrane protein-associated protein A from Bos taurus (Bovine).